The following is a 293-amino-acid chain: Large ribosomal subunit protein uL18 (293 aa).

The span at Ile247–Val263 shows a compositional bias: basic and acidic residues. Residues Ile247–Gln283 are disordered. Positions Lys264–Gln283 are enriched in basic residues.

This sequence belongs to the universal ribosomal protein uL18 family. In terms of assembly, component of the large ribosomal subunit (LSU).

It is found in the cytoplasm. Its subcellular location is the nucleus. In terms of biological role, component of the ribosome, a large ribonucleoprotein complex responsible for the synthesis of proteins in the cell. The small ribosomal subunit (SSU) binds messenger RNAs (mRNAs) and translates the encoded message by selecting cognate aminoacyl-transfer RNA (tRNA) molecules. The large subunit (LSU) contains the ribosomal catalytic site termed the peptidyl transferase center (PTC), which catalyzes the formation of peptide bonds, thereby polymerizing the amino acids delivered by tRNAs into a polypeptide chain. The nascent polypeptides leave the ribosome through a tunnel in the LSU and interact with protein factors that function in enzymatic processing, targeting, and the membrane insertion of nascent chains at the exit of the ribosomal tunnel. The sequence is that of Large ribosomal subunit protein uL18 (RPL5) from Suberites domuncula (Sponge).